Here is a 108-residue protein sequence, read N- to C-terminus: Putative double-stranded DNA mimic protein PBPRA1522 (108 aa).

The protein belongs to the putative dsDNA mimic protein family.

In terms of biological role, may act as a double-stranded DNA (dsDNA) mimic. Probably regulates the activity of a dsDNA-binding protein. This Photobacterium profundum (strain SS9) protein is Putative double-stranded DNA mimic protein PBPRA1522.